The sequence spans 221 residues: Uracil-DNA glycosylase (221 aa).

The active-site Proton acceptor is the aspartate 65.

Belongs to the uracil-DNA glycosylase (UDG) superfamily. UNG family.

Its subcellular location is the cytoplasm. It carries out the reaction Hydrolyzes single-stranded DNA or mismatched double-stranded DNA and polynucleotides, releasing free uracil.. Its function is as follows. Excises uracil residues from the DNA which can arise as a result of misincorporation of dUMP residues by DNA polymerase or due to deamination of cytosine. This chain is Uracil-DNA glycosylase, found in Christiangramia forsetii (strain DSM 17595 / CGMCC 1.15422 / KT0803) (Gramella forsetii).